The sequence spans 1232 residues: DNA-directed RNA polymerase subunit beta (1232 aa).

Residues 1170 to 1232 are disordered; that stretch reads SVDEDADELE…LDLDDFGDEH (63 aa). The span at 1171–1180 shows a compositional bias: acidic residues; that stretch reads VDEDADELEV. The segment covering 1189-1198 has biased composition (basic and acidic residues); the sequence is PEEKEEKEKE. A compositionally biased stretch (acidic residues) spans 1199–1232; sequence DSDEYDDLREEDVEPDLEELSLDDLDLDDFGDEH.

This sequence belongs to the RNA polymerase beta chain family. In terms of assembly, the RNAP catalytic core consists of 2 alpha, 1 beta, 1 beta' and 1 omega subunit. When a sigma factor is associated with the core the holoenzyme is formed, which can initiate transcription.

The catalysed reaction is RNA(n) + a ribonucleoside 5'-triphosphate = RNA(n+1) + diphosphate. Its function is as follows. DNA-dependent RNA polymerase catalyzes the transcription of DNA into RNA using the four ribonucleoside triphosphates as substrates. This is DNA-directed RNA polymerase subunit beta from Clostridium botulinum (strain Okra / Type B1).